Here is a 343-residue protein sequence, read N- to C-terminus: Probable dual-specificity RNA methyltransferase RlmN (343 aa).

Glutamate 91 acts as the Proton acceptor in catalysis. A Radical SAM core domain is found at 97–326 (HPDRITACIS…AEIRREKGTD (230 aa)). Residues cysteine 104 and cysteine 331 are joined by a disulfide bond. [4Fe-4S] cluster is bound by residues cysteine 111, cysteine 115, and cysteine 118. S-adenosyl-L-methionine-binding positions include 158-159 (GE), serine 190, 213-215 (SLH), and asparagine 289. The S-methylcysteine intermediate role is filled by cysteine 331.

Belongs to the radical SAM superfamily. RlmN family. It depends on [4Fe-4S] cluster as a cofactor.

The protein resides in the cytoplasm. It catalyses the reaction adenosine(2503) in 23S rRNA + 2 reduced [2Fe-2S]-[ferredoxin] + 2 S-adenosyl-L-methionine = 2-methyladenosine(2503) in 23S rRNA + 5'-deoxyadenosine + L-methionine + 2 oxidized [2Fe-2S]-[ferredoxin] + S-adenosyl-L-homocysteine. The enzyme catalyses adenosine(37) in tRNA + 2 reduced [2Fe-2S]-[ferredoxin] + 2 S-adenosyl-L-methionine = 2-methyladenosine(37) in tRNA + 5'-deoxyadenosine + L-methionine + 2 oxidized [2Fe-2S]-[ferredoxin] + S-adenosyl-L-homocysteine. Its function is as follows. Specifically methylates position 2 of adenine 2503 in 23S rRNA and position 2 of adenine 37 in tRNAs. The sequence is that of Probable dual-specificity RNA methyltransferase RlmN from Thermotoga maritima (strain ATCC 43589 / DSM 3109 / JCM 10099 / NBRC 100826 / MSB8).